The sequence spans 601 residues: Glutathione-regulated potassium-efflux system protein KefB (601 aa).

The next 13 helical transmembrane spans lie at 4-24 (SDFL…VPLA), 29-49 (IGAV…GLGF), 55-75 (EILH…GLEL), 87-107 (IFGV…GLLM), 115-135 (AAVV…LQLM), 152-172 (VLLF…LLAG), 177-197 (HFDW…LIGG), 207-227 (FIAA…LVLG), 230-250 (LFMD…GVLL), 268-288 (GLLL…GVLY), 291-311 (LLWV…VLYL), 324-344 (MQFA…FSTA), and 356-376 (ALLL…MKLV). Residues 400-519 (KPQVIVVGFG…AGVTQFSRET (120 aa)) form the RCK N-terminal domain.

It belongs to the monovalent cation:proton antiporter 2 (CPA2) transporter (TC 2.A.37) family. KefB subfamily. In terms of assembly, interacts with the regulatory subunit KefG.

Its subcellular location is the cell inner membrane. Functionally, pore-forming subunit of a potassium efflux system that confers protection against electrophiles. Catalyzes K(+)/H(+) antiport. This Escherichia coli O81 (strain ED1a) protein is Glutathione-regulated potassium-efflux system protein KefB.